We begin with the raw amino-acid sequence, 738 residues long: uncharacterized protein (738 aa).

Composition is skewed to polar residues over residues Met-1–Ser-34, Thr-140–Pro-169, and Lys-177–Asp-197. Disordered stretches follow at residues Met-1–Ile-51 and Thr-140–Asp-197. One can recognise an RRM domain in the interval Ser-363–Ile-434. The tract at residues Tyr-466–Arg-487 is disordered.

This is an uncharacterized protein from Schizosaccharomyces pombe (strain 972 / ATCC 24843) (Fission yeast).